Reading from the N-terminus, the 89-residue chain is Small ribosomal subunit protein bS20 (89 aa).

Over residues 1-12 (MANIKSAKKRAK) the composition is skewed to basic residues. Residues 1–24 (MANIKSAKKRAKQTVVRNERNTGQ) are disordered.

It belongs to the bacterial ribosomal protein bS20 family.

Functionally, binds directly to 16S ribosomal RNA. The protein is Small ribosomal subunit protein bS20 of Xanthomonas campestris pv. campestris (strain 8004).